The primary structure comprises 294 residues: Osteopontin (294 aa).

The signal sequence occupies residues Met1 to Ser16. 13 positions are modified to phosphoserine: Ser24, Ser26, Ser27, Ser61, Ser62, Ser75, Ser77, Ser80, Ser106, Ser109, Ser112, Ser115, and Ser118. A disordered region spans residues Trp42 to Asp274. Positions Ser48–Ser61 are enriched in polar residues. Residues Asp85 to Asp110 are compositionally biased toward acidic residues. The span at Thr121–Thr130 shows a compositional bias: polar residues. O-linked (GalNAc...) threonine glycans are attached at residues Thr123, Thr132, and Thr137. Residues Arg144 to Asp146 carry the Cell attachment site motif. Phosphothreonine occurs at positions 170 and 175. Residues Leu174–Leu187 are compositionally biased toward basic and acidic residues. Phosphoserine is present on residues Ser176, Ser180, Ser200, Ser209, Ser213, and Ser219. Over residues Ser197 to Asp216 the composition is skewed to polar residues. Ser219 is a glycosylation site (O-linked (Xyl...) (chondroitin sulfate) serine). Positions Leu220–Gln232 are enriched in basic and acidic residues. Phosphothreonine is present on Thr222. Ser228, Ser231, Ser234, Ser238, Ser243, Ser247, Ser250, Ser255, Ser260, Ser271, Ser283, Ser288, Ser290, and Ser291 each carry phosphoserine. Residues Ser234 to Ala249 show a composition bias toward polar residues. A compositionally biased stretch (basic and acidic residues) spans Asp263 to Asp274. An O-linked (Xyl...) (chondroitin sulfate) serine glycan is attached at Ser288.

The protein belongs to the osteopontin family. In terms of assembly, interacts (via N-terminus) with integrin ITGA9:ITGB1. Post-translationally, extensively phosphorylated by FAM20C in the extracellular medium at multiple sites within the S-x-E/pS motif. The phosphorylated form inhibits hydroxyapatite crystallization. Dephosphorylation via a mechanism involving ALPL/TNAP promotes hydroxyapatite crystallization. In terms of processing, O-glycosylated. Forms covalent cross-links mediated by transglutaminase TGM2, between a glutamine and the epsilon-amino group of a lysine residue, forming homopolymers and heteropolymers, increasing its collagen binding properties.

The protein resides in the secreted. In terms of biological role, major non-collagenous bone protein that binds tightly to hydroxyapatite. Appears to form an integral part of the mineralized matrix. Probably important to cell-matrix interaction. Acts as a cytokine involved in enhancing production of interferon-gamma and interleukin-12 and reducing production of interleukin-10 and is essential in the pathway that leads to type I immunity. The polypeptide is Osteopontin (Spp1) (Mus musculus (Mouse)).